A 182-amino-acid polypeptide reads, in one-letter code: uncharacterized protein (182 aa).

An N-terminal signal peptide occupies residues 1–29 (MKKLLKKLVVLFLSSLVIIFNVWYFIICA). The chain crosses the membrane as a helical span at residues 152–174 (WNLYFWTAASYNAVIFVFVLVIV).

It is found in the membrane. This is an uncharacterized protein from Bacillus subtilis (strain 168).